Consider the following 328-residue polypeptide: uncharacterized protein (328 aa).

Residues 296 to 328 (APEGDLEDEIIEVDPEQPRDDPYRRLRTPPPGG) are disordered. Residues 299-310 (GDLEDEIIEVDP) show a composition bias toward acidic residues.

Possibly necessary for replication. This is an uncharacterized protein from Halobacterium sp. (strain GN101).